We begin with the raw amino-acid sequence, 284 residues long: Bifunctional protein FolD (284 aa).

Residues 166–168 and serine 191 each bind NADP(+); that span reads GRS.

The protein belongs to the tetrahydrofolate dehydrogenase/cyclohydrolase family. As to quaternary structure, homodimer.

It catalyses the reaction (6R)-5,10-methylene-5,6,7,8-tetrahydrofolate + NADP(+) = (6R)-5,10-methenyltetrahydrofolate + NADPH. The enzyme catalyses (6R)-5,10-methenyltetrahydrofolate + H2O = (6R)-10-formyltetrahydrofolate + H(+). The protein operates within one-carbon metabolism; tetrahydrofolate interconversion. In terms of biological role, catalyzes the oxidation of 5,10-methylenetetrahydrofolate to 5,10-methenyltetrahydrofolate and then the hydrolysis of 5,10-methenyltetrahydrofolate to 10-formyltetrahydrofolate. This is Bifunctional protein FolD from Delftia acidovorans (strain DSM 14801 / SPH-1).